The chain runs to 456 residues: Bifunctional protein GlmU (456 aa).

Residues Met1 to Arg228 are pyrophosphorylase. UDP-N-acetyl-alpha-D-glucosamine-binding positions include Leu8–Gly11, Lys22, Gln72, Gly77–Thr78, Tyr99–Asp101, Gly138, Glu153, Asn168, and Asn226. Position 101 (Asp101) interacts with Mg(2+). Asn226 is a Mg(2+) binding site. The interval Glu229 to Ala249 is linker. An N-acetyltransferase region spans residues Gly250–Lys456. Arg331 and Lys349 together coordinate UDP-N-acetyl-alpha-D-glucosamine. His361 serves as the catalytic Proton acceptor. Positions 364 and 375 each coordinate UDP-N-acetyl-alpha-D-glucosamine. Residues Asn384–Tyr385, Ser403, Ser421, and Arg438 each bind acetyl-CoA.

In the N-terminal section; belongs to the N-acetylglucosamine-1-phosphate uridyltransferase family. The protein in the C-terminal section; belongs to the transferase hexapeptide repeat family. Homotrimer. Requires Mg(2+) as cofactor.

It is found in the cytoplasm. It carries out the reaction alpha-D-glucosamine 1-phosphate + acetyl-CoA = N-acetyl-alpha-D-glucosamine 1-phosphate + CoA + H(+). The enzyme catalyses N-acetyl-alpha-D-glucosamine 1-phosphate + UTP + H(+) = UDP-N-acetyl-alpha-D-glucosamine + diphosphate. It participates in nucleotide-sugar biosynthesis; UDP-N-acetyl-alpha-D-glucosamine biosynthesis; N-acetyl-alpha-D-glucosamine 1-phosphate from alpha-D-glucosamine 6-phosphate (route II): step 2/2. Its pathway is nucleotide-sugar biosynthesis; UDP-N-acetyl-alpha-D-glucosamine biosynthesis; UDP-N-acetyl-alpha-D-glucosamine from N-acetyl-alpha-D-glucosamine 1-phosphate: step 1/1. It functions in the pathway bacterial outer membrane biogenesis; LPS lipid A biosynthesis. Its function is as follows. Catalyzes the last two sequential reactions in the de novo biosynthetic pathway for UDP-N-acetylglucosamine (UDP-GlcNAc). The C-terminal domain catalyzes the transfer of acetyl group from acetyl coenzyme A to glucosamine-1-phosphate (GlcN-1-P) to produce N-acetylglucosamine-1-phosphate (GlcNAc-1-P), which is converted into UDP-GlcNAc by the transfer of uridine 5-monophosphate (from uridine 5-triphosphate), a reaction catalyzed by the N-terminal domain. This is Bifunctional protein GlmU from Alkaliphilus metalliredigens (strain QYMF).